A 246-amino-acid polypeptide reads, in one-letter code: 2-aminoethylphosphonate cytidylyltransferase (246 aa).

Alanine 19, glycine 20, lysine 34, serine 97, glutamate 114, and alanine 115 together coordinate CMP-(2-aminoethyl)phosphonate. Residues aspartate 116 and aspartate 145 each contribute to the Mg(2+) site. Aspartate 145, lysine 161, and aspartate 202 together coordinate CMP-(2-aminoethyl)phosphonate. Mg(2+) is bound by residues glutamate 226 and aspartate 228.

This sequence belongs to the LicC/PntC cytidylyltransferase family. Monomer. Mg(2+) is required as a cofactor.

It carries out the reaction (2-aminoethyl)phosphonate + CTP = CMP-(2-aminoethyl)phosphonate + diphosphate. The protein operates within phosphorus metabolism; phosphonate biosynthesis. Functionally, cytidylyltransferase involved in the biosynthesis of cell-surface phosphonates. Catalyzes the activation of 2-aminoethylphosphonate (AEP) to CMP-2-aminoethylphosphonate (CMP-AEP). Can also use phosphocholine, with much lower efficiency. Exhibits strong activity towards CTP, limited activity towards ATP and no activity with GTP. This chain is 2-aminoethylphosphonate cytidylyltransferase, found in Lancefieldella rimae (strain ATCC 49626 / DSM 7090 / CCUG 31168 / NBRC 15546 / VPI D140H-11A) (Atopobium rimae).